The sequence spans 299 residues: Coenzyme PQQ synthesis protein B (299 aa).

Belongs to the PqqB family.

The protein operates within cofactor biosynthesis; pyrroloquinoline quinone biosynthesis. Functionally, may be involved in the transport of PQQ or its precursor to the periplasm. This chain is Coenzyme PQQ synthesis protein B, found in Methylorubrum extorquens (strain ATCC 14718 / DSM 1338 / JCM 2805 / NCIMB 9133 / AM1) (Methylobacterium extorquens).